Reading from the N-terminus, the 196-residue chain is O-methyltransferase dpmpI (196 aa).

Residues 127 to 128 (GG), Asp152, and 174 to 175 (SF) contribute to the S-adenosyl-L-methionine site. The tract at residues 166–196 (NGIEAVPHSFEDPQPIKSKSPRLDNLARERL) is disordered. Residues 186–196 (PRLDNLARERL) are compositionally biased toward basic and acidic residues.

The protein belongs to the class I-like SAM-binding methyltransferase superfamily. Cation-independent O-methyltransferase family.

It participates in secondary metabolite biosynthesis; terpenoid biosynthesis. In terms of biological role, O-methyltransferase; part of the gene cluster that mediates the biosynthesis of diterpenoid pyrones. The first step of the pathway is the synthesis of the alpha-pyrone moiety by the polyketide synthase dpmpA via condensation of one acetyl-CoA starter unit with 3 malonyl-CoA units and 2 methylations. The alpha-pyrone is then combined with geranylgeranyl pyrophosphate (GGPP) formed by the GGPP synthase dpmpD through the action of the prenyltransferase dpmpC to yield a linear alpha-pyrone diterpenoid. Subsequent steps in the diterpenoid pyrone biosynthetic pathway involve the decalin core formation, which is initiated by the epoxidation of the C10-C11 olefin by the FAD-dependent oxidoreductase dpmpE, and is followed by a cyclization cascade catalyzed by the terpene cyclase dpmpB. The short chain dehydrogenase/reductase dpmpG then oxidizes the 8S hydroxy group to a ketone and the short chain dehydrogenase/reductase dpmpH reduces the ketone to the 8R hydroxy group to yield higginsianin B. Higginsianin B is further methylated by the methyltransferase dpmpI to produce the intermediate named FDDP B. The cytochrome P450 monooxygenase dpmpJ then oxidizes the C-26 methyl to primary alcohol, producing the final diterpenoid pyrone with a C-26 primary alcohol on the gamma-pyrone moiety named FDDP C. The polypeptide is O-methyltransferase dpmpI (Macrophomina phaseolina (strain MS6) (Charcoal rot fungus)).